Consider the following 148-residue polypeptide: Large ribosomal subunit protein bL9 (148 aa).

It belongs to the bacterial ribosomal protein bL9 family.

Its function is as follows. Binds to the 23S rRNA. In Lysinibacillus sphaericus (strain C3-41), this protein is Large ribosomal subunit protein bL9.